Consider the following 190-residue polypeptide: NADH-quinone oxidoreductase subunit B (190 aa).

Positions 39, 40, 104, and 135 each coordinate [4Fe-4S] cluster.

It belongs to the complex I 20 kDa subunit family. NDH-1 is composed of 14 different subunits. Subunits NuoB, C, D, E, F, and G constitute the peripheral sector of the complex. [4Fe-4S] cluster is required as a cofactor.

The protein resides in the cell inner membrane. The enzyme catalyses a quinone + NADH + 5 H(+)(in) = a quinol + NAD(+) + 4 H(+)(out). In terms of biological role, NDH-1 shuttles electrons from NADH, via FMN and iron-sulfur (Fe-S) centers, to quinones in the respiratory chain. The immediate electron acceptor for the enzyme in this species is believed to be a menaquinone. Couples the redox reaction to proton translocation (for every two electrons transferred, four hydrogen ions are translocated across the cytoplasmic membrane), and thus conserves the redox energy in a proton gradient. The sequence is that of NADH-quinone oxidoreductase subunit B from Prosthecochloris aestuarii (strain DSM 271 / SK 413).